Reading from the N-terminus, the 1363-residue chain is DNA-directed RNA polymerase subunit beta (1363 aa).

The protein belongs to the RNA polymerase beta chain family. In terms of assembly, the RNAP catalytic core consists of 2 alpha, 1 beta, 1 beta' and 1 omega subunit. When a sigma factor is associated with the core the holoenzyme is formed, which can initiate transcription.

It carries out the reaction RNA(n) + a ribonucleoside 5'-triphosphate = RNA(n+1) + diphosphate. Its function is as follows. DNA-dependent RNA polymerase catalyzes the transcription of DNA into RNA using the four ribonucleoside triphosphates as substrates. This chain is DNA-directed RNA polymerase subunit beta, found in Pelagibacter ubique (strain HTCC1062).